We begin with the raw amino-acid sequence, 82 residues long: Delta-actitoxin-Aeq2b 3 (82 aa).

Positions 1–19 (MNRLMILVFAAVILALASA) are cleaved as a signal peptide. The propeptide occupies 20–26 (DEDVDIT). Disulfide bonds link cysteine 32/cysteine 79, cysteine 34/cysteine 69, and cysteine 62/cysteine 80.

It belongs to the sea anemone sodium channel inhibitory toxin family. Type I subfamily.

Its subcellular location is the secreted. The protein resides in the nematocyst. Functionally, binds specifically to voltage-gated sodium channels (Nav), thereby delaying their inactivation during signal transduction. Causes death to crabs. The chain is Delta-actitoxin-Aeq2b 3 from Actinia equina (Beadlet anemone).